Reading from the N-terminus, the 384-residue chain is Probable tRNA sulfurtransferase (384 aa).

The THUMP domain occupies 57 to 160 (EEVVDRVRNV…KKTYIYSKRI (104 aa)). ATP contacts are provided by residues 177–178 (ML), 202–203 (YF), Arg259, Gly281, and Gln290.

The protein belongs to the ThiI family.

It localises to the cytoplasm. The enzyme catalyses [ThiI sulfur-carrier protein]-S-sulfanyl-L-cysteine + a uridine in tRNA + 2 reduced [2Fe-2S]-[ferredoxin] + ATP + H(+) = [ThiI sulfur-carrier protein]-L-cysteine + a 4-thiouridine in tRNA + 2 oxidized [2Fe-2S]-[ferredoxin] + AMP + diphosphate. It catalyses the reaction [ThiS sulfur-carrier protein]-C-terminal Gly-Gly-AMP + S-sulfanyl-L-cysteinyl-[cysteine desulfurase] + AH2 = [ThiS sulfur-carrier protein]-C-terminal-Gly-aminoethanethioate + L-cysteinyl-[cysteine desulfurase] + A + AMP + 2 H(+). Its pathway is cofactor biosynthesis; thiamine diphosphate biosynthesis. Catalyzes the ATP-dependent transfer of a sulfur to tRNA to produce 4-thiouridine in position 8 of tRNAs, which functions as a near-UV photosensor. Also catalyzes the transfer of sulfur to the sulfur carrier protein ThiS, forming ThiS-thiocarboxylate. This is a step in the synthesis of thiazole, in the thiamine biosynthesis pathway. The sulfur is donated as persulfide by IscS. This chain is Probable tRNA sulfurtransferase, found in Clostridium acetobutylicum (strain ATCC 824 / DSM 792 / JCM 1419 / IAM 19013 / LMG 5710 / NBRC 13948 / NRRL B-527 / VKM B-1787 / 2291 / W).